The following is a 317-amino-acid chain: Succinate receptor 1 (317 aa).

At methionine 1–serine 23 the chain is on the extracellular side. N-linked (GlcNAc...) asparagine glycosylation is present at asparagine 4. The helical transmembrane segment at alanine 24–cysteine 47 threads the bilayer. Residues methionine 48–asparagine 55 lie on the Cytoplasmic side of the membrane. Residues valine 56–isoleucine 76 traverse the membrane as a helical segment. The Extracellular segment spans residues lysine 77–asparagine 101. Cysteines 91 and 168 form a disulfide. Residues leucine 102–leucine 119 traverse the membrane as a helical segment. Over methionine 120 to glutamate 133 the chain is Cytoplasmic. A helical membrane pass occupies residues phenylalanine 134–isoleucine 157. Residues asparagine 158–asparagine 180 lie on the Extracellular side of the membrane. Residues leucine 181 to tyrosine 204 traverse the membrane as a helical segment. Residues lysine 205–arginine 228 are Cytoplasmic-facing. A helical membrane pass occupies residues leucine 229–isoleucine 246. Over methionine 247–proline 277 the chain is Extracellular. Residues leucine 278–glycine 294 form a helical membrane-spanning segment. Residues aspartate 295–threonine 317 are Cytoplasmic-facing.

This sequence belongs to the G-protein coupled receptor 1 family. As to expression, predominantly expressed in the kidney (proximal and distal tubules and the juxtaglomerular apparatus). Weakly expressed in liver, spleen and small intestine. Highly expressed in immature dendritic cells, expression rapidly downregulates after maturation. Also expressed in macrophages. Specifically expressed in intestinal tuft cells. Expression in whole muscle is attributable to major non-myofibrillar resident cell types, including stromal, endothelial and satellite cell populations.

Its subcellular location is the cell membrane. Functionally, g protein-coupled receptor for succinate able to mediate signaling through Gq/GNAQ or Gi/GNAI second messengers depending on the cell type and the processes regulated. Succinate-SUCNR1 signaling serves as a link between metabolic stress, inflammation and energy homeostasis. In macrophages, plays a range of immune-regulatory roles. During inflammation, succinate-SUCNR1 signaling may act as an anti-inflammatory mediator or boost inflammation depending on the inflammatory status of cells. Hyperpolarizes M2 macrophages versus M1 phenotype through Gq signaling by regulating the transcription of genes involved in immune function. In activated M1 macrophages, plays a pro-inflammatory role in response to LPS. Expressed in dendritic cells, where it is involved in the sensing of immunological danger and enhances immunity. Mediates succinate triggered intracelleular calcium mobilization, induces migratory responses and acts in synergy with Toll-like receptor ligands for the production of proinflammatory cytokines as well as an enhancement of antigen-specific activation of helper T cells. In the small intestine, mediates the activation of tuft cells by dietary succinate and triggers type 2 immunity. In adipocytes, plays an important role in the control of energy metabolism. In response to succinate, controls leptin expression in an AMPK-JNK-CEBPA-dependent as well as circadian clock-regulated manner. In muscle tissue, is expressed in non-muscle cells and coordinates muscle remodeling in response to the succinate produced during exercise training in a paracrine manner. In retina, acts as a mediator of vessel growth during retinal development. In response to succinate, regulates the production of angiogenic factors, including VEGF, by retinal ganglion neurons. The protein is Succinate receptor 1 (Sucnr1) of Mus musculus (Mouse).